A 278-amino-acid chain; its full sequence is Bis(5'-nucleosyl)-tetraphosphatase, symmetrical (278 aa).

The protein belongs to the Ap4A hydrolase family.

The enzyme catalyses P(1),P(4)-bis(5'-adenosyl) tetraphosphate + H2O = 2 ADP + 2 H(+). Hydrolyzes diadenosine 5',5'''-P1,P4-tetraphosphate to yield ADP. This is Bis(5'-nucleosyl)-tetraphosphatase, symmetrical from Nitrosococcus oceani (strain ATCC 19707 / BCRC 17464 / JCM 30415 / NCIMB 11848 / C-107).